The following is a 336-amino-acid chain: DNA-directed RNA polymerase subunit alpha (336 aa).

The tract at residues 1–226 (MLIAQRPTLS…ELFGLARELN (226 aa)) is alpha N-terminal domain (alpha-NTD). Residues 243-336 (LAADMALPIE…SDDAFGDDEL (94 aa)) form an alpha C-terminal domain (alpha-CTD) region.

This sequence belongs to the RNA polymerase alpha chain family. As to quaternary structure, homodimer. The RNAP catalytic core consists of 2 alpha, 1 beta, 1 beta' and 1 omega subunit. When a sigma factor is associated with the core the holoenzyme is formed, which can initiate transcription.

The enzyme catalyses RNA(n) + a ribonucleoside 5'-triphosphate = RNA(n+1) + diphosphate. Functionally, DNA-dependent RNA polymerase catalyzes the transcription of DNA into RNA using the four ribonucleoside triphosphates as substrates. The polypeptide is DNA-directed RNA polymerase subunit alpha (Renibacterium salmoninarum (strain ATCC 33209 / DSM 20767 / JCM 11484 / NBRC 15589 / NCIMB 2235)).